Reading from the N-terminus, the 776-residue chain is Protein SEY1 (776 aa).

Residues 1-681 are Cytoplasmic-facing; it reads MADRSAIQLI…KRSIITTRTH (681 aa). Residues 34-263 form the GB1/RHD3-type G domain; sequence GLDYHVISVF…TENYYFKPQY (230 aa). 44–51 serves as a coordination point for GTP; that stretch reads GSQSSGKS. A helical membrane pass occupies residues 682–702; it reads IPPWIYVLLAVLGWNEFVAVI. Over 703–705 the chain is Lumenal; that stretch reads RNP. A helical membrane pass occupies residues 706–726; that stretch reads LFVTLTLILGATFFVIHKFGL. Over 727 to 776 the chain is Cytoplasmic; sequence WGPVVNVVQSAVGETRTAIKDKLRQFVVEDHEVKESFEMKDFSKNEQKEK.

Belongs to the TRAFAC class dynamin-like GTPase superfamily. GB1/RHD3 GTPase family. RHD3 subfamily. In terms of assembly, interacts with RTN1 and YOP1; GTP binding is not required for these interactions.

The protein resides in the endoplasmic reticulum membrane. Its function is as follows. Cooperates with the reticulon proteins RTN1 and RTN2 and the tubule-shaping DP1 family protein YOP1 to generate and maintain the structure of the tubular endoplasmic reticulum network. Has GTPase activity, which is required for its function in ER organization. The polypeptide is Protein SEY1 (Saccharomyces cerevisiae (strain AWRI1631) (Baker's yeast)).